The sequence spans 333 residues: Sphingomyelinase C (333 aa).

Positions 1–27 (MKGKLLKGVLSFGIGLGVLYGGSSVQA) are cleaved as a signal peptide. C150 and C186 form a disulfide bridge.

Belongs to the neutral sphingomyelinase family. Requires Mg(2+) as cofactor.

The protein localises to the secreted. The catalysed reaction is a sphingomyelin + H2O = phosphocholine + an N-acylsphing-4-enine + H(+). Its activity is regulated as follows. Activated by cobalt and manganese ions. Required, with sphingomyelinase, to effect target cell lysis (hemolysis). In Bacillus cereus, this protein is Sphingomyelinase C (sph).